Consider the following 469-residue polypeptide: Phenolic glucoside malonyltransferase 1 (469 aa).

Residue M1 is modified to N-acetylmethionine. H169 acts as the Proton acceptor in catalysis. The HXXXD motif signature appears at 169–173 (HAVLD). 291 to 292 (ST) contacts malonyl-CoA. Catalysis depends on D413, which acts as the Proton acceptor. A DFGWG motif motif is present at residues 413–417 (DFGWG).

It belongs to the plant acyltransferase family. Phenolic glucoside malonyltransferase subfamily.

It catalyses the reaction a flavonol 3-O-beta-D-glucoside + malonyl-CoA = a flavonol 3-O-(6-O-malonyl-beta-D-glucoside) + CoA. The enzyme catalyses a flavonol 7-O-beta-D-glucoside + malonyl-CoA = a flavonol 7-O-(6-O-malonyl-beta-D-glucoside) + CoA. In terms of biological role, malonyltransferase acting on xenobiotic glucosides. Has activity toward 2-Naphthol glucoside (2NAG), 1-Naphthol glucoside (1NAG), kaempferol 7-O-glucoside, kaempferol 3-O-glucoside, hydroxycoumarin glucosides, phenol-glucosides and isoflavone glucoside (daidzin), but not toward 4-coumaroyl glucoside, kaempferol 3,7-O-diglucoside, salicylic acid glucoside and phlorizin. In vivo, seems to be involved in the malonylation of 2-Naphthol glucoside while PMAT2 would be involved in the malonylation of 4-methylumbelliferone glucoside or 4-nitrophenyl glucoside. The sequence is that of Phenolic glucoside malonyltransferase 1 (PMAT1) from Arabidopsis thaliana (Mouse-ear cress).